A 260-amino-acid polypeptide reads, in one-letter code: Neuraminyllactose-binding hemagglutinin (260 aa).

Residues 1–27 form the signal peptide; sequence MKANNHFKDFAWKKCLLGASVVALLVG. The N-palmitoyl cysteine moiety is linked to residue Cys-28. The S-diacylglycerol cysteine moiety is linked to residue Cys-28.

The protein resides in the cell outer membrane. This chain is Neuraminyllactose-binding hemagglutinin (hpaA), found in Helicobacter pylori (strain ATCC 700392 / 26695) (Campylobacter pylori).